Here is a 186-residue protein sequence, read N- to C-terminus: Ribonuclease M5 (186 aa).

Positions 4–94 (KEIIVVEGRD…AKPKNKRGIG (91 aa)) constitute a Toprim domain. Mg(2+)-binding residues include Glu10, Asp56, and Asp58.

The protein belongs to the ribonuclease M5 family. In terms of assembly, requires ribosomal protein L18 (rplR) for catalysis; it can be replaced by 30% dimethylsulfoxide suggesting L18 functions as an rRNA folding chaperone. The cofactor is Mg(2+). Mn(2+) is required as a cofactor. It depends on Ca(2+) as a cofactor.

It is found in the cytoplasm. The enzyme catalyses Endonucleolytic cleavage of RNA, removing 21 and 42 nucleotides, respectively, from the 5'- and 3'-termini of a 5S-rRNA precursor.. Its function is as follows. Required for correct processing of both the 5' and 3' ends of 5S rRNA precursor. Cleaves both sides of a double-stranded region yielding mature 5S rRNA in one step. Releases 5'-phosphoryl and 3'-hydroxy termini. This chain is Ribonuclease M5, found in Bacillus subtilis (strain 168).